A 475-amino-acid polypeptide reads, in one-letter code: Ribulose bisphosphate carboxylase large chain (475 aa).

Residues 1–2 (MS) constitute a propeptide that is removed on maturation. The residue at position 3 (Pro3) is an N-acetylproline. N6,N6,N6-trimethyllysine is present on Lys14. Substrate-binding residues include Asn123 and Thr173. Lys175 serves as the catalytic Proton acceptor. Lys177 serves as a coordination point for substrate. Mg(2+) is bound by residues Lys201, Asp203, and Glu204. Lys201 is modified (N6-carboxylysine). The active-site Proton acceptor is the His294. The substrate site is built by Arg295, His327, and Ser379.

This sequence belongs to the RuBisCO large chain family. Type I subfamily. In terms of assembly, heterohexadecamer of 8 large chains and 8 small chains; disulfide-linked. The disulfide link is formed within the large subunit homodimers. Mg(2+) is required as a cofactor. In terms of processing, the disulfide bond which can form in the large chain dimeric partners within the hexadecamer appears to be associated with oxidative stress and protein turnover.

It localises to the plastid. Its subcellular location is the chloroplast. It carries out the reaction 2 (2R)-3-phosphoglycerate + 2 H(+) = D-ribulose 1,5-bisphosphate + CO2 + H2O. It catalyses the reaction D-ribulose 1,5-bisphosphate + O2 = 2-phosphoglycolate + (2R)-3-phosphoglycerate + 2 H(+). RuBisCO catalyzes two reactions: the carboxylation of D-ribulose 1,5-bisphosphate, the primary event in carbon dioxide fixation, as well as the oxidative fragmentation of the pentose substrate in the photorespiration process. Both reactions occur simultaneously and in competition at the same active site. The sequence is that of Ribulose bisphosphate carboxylase large chain from Cryptomeria japonica (Japanese cedar).